A 96-amino-acid polypeptide reads, in one-letter code: Ubiquitin-like protein NEDD8-like protein 1 (96 aa).

A disordered region spans residues 75 to 96 (SQSDNSEKSEKSGKSEKDCILM). Residues 79-96 (NSEKSEKSGKSEKDCILM) show a composition bias toward basic and acidic residues.

This sequence belongs to the ubiquitin family.

This chain is Ubiquitin-like protein NEDD8-like protein 1 (nedd8l1), found in Dictyostelium discoideum (Social amoeba).